Consider the following 244-residue polypeptide: 2-C-methyl-D-erythritol 4-phosphate cytidylyltransferase (244 aa).

Belongs to the IspD/TarI cytidylyltransferase family. IspD subfamily.

The catalysed reaction is 2-C-methyl-D-erythritol 4-phosphate + CTP + H(+) = 4-CDP-2-C-methyl-D-erythritol + diphosphate. It participates in isoprenoid biosynthesis; isopentenyl diphosphate biosynthesis via DXP pathway; isopentenyl diphosphate from 1-deoxy-D-xylulose 5-phosphate: step 2/6. In terms of biological role, catalyzes the formation of 4-diphosphocytidyl-2-C-methyl-D-erythritol from CTP and 2-C-methyl-D-erythritol 4-phosphate (MEP). The sequence is that of 2-C-methyl-D-erythritol 4-phosphate cytidylyltransferase from Corynebacterium diphtheriae (strain ATCC 700971 / NCTC 13129 / Biotype gravis).